Consider the following 375-residue polypeptide: MICPVIELAQQLIKRPSLSPSDAGCQEIMIQRLAAIGFTIEPMNFGDTLNFWAWRGEGETLAFAGHTDVVPTGDESHWHSPPFEPTIRDGMLYGRGAADMKGSLAAMIVAAERFVAAHPDHKGRLAFMITSDEEAKATNGTVKVVEALMARHERLDYCLVGEPSSTDRVGDIVKNGRRGSITANLRIHGVQGHVAYPHLADNPVHRAMPALNELVATQWDEGNAFFPATSMQIANLQAGTGSNNVIPGEFYVQFNFRFSTELTDSLIKQRVAALLDRHQLDYTLEWVLSGQPFLTAKGALVDAVVNAVKHYTEITPQLLTTGGTSDGRFIALMGAQVVELGPVNATIHKVNECVSAADLQLLSRMYQKIMEQLIA.

His66 contacts Zn(2+). Residue Asp68 is part of the active site. Asp99 serves as a coordination point for Zn(2+). Catalysis depends on Glu133, which acts as the Proton acceptor. Positions 134, 162, and 348 each coordinate Zn(2+).

Belongs to the peptidase M20A family. DapE subfamily. As to quaternary structure, homodimer. It depends on Zn(2+) as a cofactor. Co(2+) is required as a cofactor.

The catalysed reaction is N-succinyl-(2S,6S)-2,6-diaminopimelate + H2O = (2S,6S)-2,6-diaminopimelate + succinate. It participates in amino-acid biosynthesis; L-lysine biosynthesis via DAP pathway; LL-2,6-diaminopimelate from (S)-tetrahydrodipicolinate (succinylase route): step 3/3. Functionally, catalyzes the hydrolysis of N-succinyl-L,L-diaminopimelic acid (SDAP), forming succinate and LL-2,6-diaminopimelate (DAP), an intermediate involved in the bacterial biosynthesis of lysine and meso-diaminopimelic acid, an essential component of bacterial cell walls. This chain is Succinyl-diaminopimelate desuccinylase, found in Yersinia pestis bv. Antiqua (strain Antiqua).